A 3546-amino-acid polypeptide reads, in one-letter code: Ubiquitin carboxyl-terminal hydrolase 34 (3546 aa).

A phosphoserine mark is found at S352, S486, S487, and S490. 3 disordered regions span residues 502–535 (KEEE…SGGS), 550–679 (VQQR…VFNT), and 1459–1478 (TGSY…DQVE). The segment covering 511–524 (APSPWSPAASPQSS) has biased composition (low complexity). 2 stretches are compositionally biased toward polar residues: residues 525–534 (DNSDTHQSGG) and 560–570 (SMQGSSDETAN). Over residues 571–590 (SGEDGSSGPGSSSGHSDGSS) the composition is skewed to low complexity. Positions 591-609 (NEVNSSHASQSAGSPGSEV) are enriched in polar residues. Over residues 610–627 (QSEDIADIEALKEEDEDD) the composition is skewed to acidic residues. Position 649 is a phosphoserine (S649). Residues 659–671 (QGMSERNGTSSGT) are compositionally biased toward polar residues. Residues 1467-1477 (PDSDDSSEDQV) show a composition bias toward acidic residues. S1469 is subject to Phosphoserine. One can recognise a USP domain in the interval 1894–2239 (VGLTNLGATC…SAYMLFYKRM (346 aa)). The active-site Nucleophile is the C1903. H2164 serves as the catalytic Proton acceptor. Phosphoserine is present on S2488. The segment at 3331–3443 (NSLQEQEAKE…HAEEQSNNGR (113 aa)) is disordered. The span at 3336–3347 (QEAKERKTKDDE) shows a compositional bias: basic and acidic residues. A phosphoserine mark is found at S3358 and S3359. Residue T3381 is modified to Phosphothreonine. 2 positions are modified to phosphoserine: S3386 and S3406. Residues 3421–3432 (SSFSEDMSNIRS) show a composition bias toward polar residues. The span at 3433 to 3443 (QHAEEQSNNGR) shows a compositional bias: basic and acidic residues. Residue S3503 is modified to Phosphoserine.

Belongs to the peptidase C19 family. In terms of assembly, interacts with AXIN1 and AXIN2. As to expression, expressed in brain at low level.

The enzyme catalyses Thiol-dependent hydrolysis of ester, thioester, amide, peptide and isopeptide bonds formed by the C-terminal Gly of ubiquitin (a 76-residue protein attached to proteins as an intracellular targeting signal).. Functionally, ubiquitin hydrolase that can remove conjugated ubiquitin from AXIN1 and AXIN2, thereby acting as a regulator of Wnt signaling pathway. Acts as an activator of the Wnt signaling pathway downstream of the beta-catenin destruction complex by deubiquitinating and stabilizing AXIN1 and AXIN2, leading to promote nuclear accumulation of AXIN1 and AXIN2 and positively regulate beta-catenin (CTNBB1)-mediated transcription. Recognizes and hydrolyzes the peptide bond at the C-terminal Gly of ubiquitin. Involved in the processing of poly-ubiquitin precursors as well as that of ubiquitinated proteins. This Homo sapiens (Human) protein is Ubiquitin carboxyl-terminal hydrolase 34 (USP34).